A 114-amino-acid polypeptide reads, in one-letter code: Large ribosomal subunit protein uL22 (114 aa).

The protein belongs to the universal ribosomal protein uL22 family. Part of the 50S ribosomal subunit.

Functionally, this protein binds specifically to 23S rRNA; its binding is stimulated by other ribosomal proteins, e.g. L4, L17, and L20. It is important during the early stages of 50S assembly. It makes multiple contacts with different domains of the 23S rRNA in the assembled 50S subunit and ribosome. In terms of biological role, the globular domain of the protein is located near the polypeptide exit tunnel on the outside of the subunit, while an extended beta-hairpin is found that lines the wall of the exit tunnel in the center of the 70S ribosome. This Myxococcus xanthus (strain DK1622) protein is Large ribosomal subunit protein uL22.